Here is a 377-residue protein sequence, read N- to C-terminus: Phospho-N-acetylmuramoyl-pentapeptide-transferase (377 aa).

Helical transmembrane passes span 2–22 (IQLL…TPAL), 55–75 (VAIL…SVLA), 82–102 (ITLS…VGFL), 122–142 (MVLQ…FPDA), 162–182 (LAFA…NLIA), 195–215 (LDGL…LITL), 236–256 (PMDL…FLWW), 263–283 (IFMG…FAVL), 288–308 (LLLV…ILQV), and 343–363 (FWVI…GDWL).

It belongs to the glycosyltransferase 4 family. MraY subfamily. Requires Mg(2+) as cofactor.

The protein resides in the cell membrane. It catalyses the reaction UDP-N-acetyl-alpha-D-muramoyl-L-alanyl-gamma-D-glutamyl-meso-2,6-diaminopimeloyl-D-alanyl-D-alanine + di-trans,octa-cis-undecaprenyl phosphate = di-trans,octa-cis-undecaprenyl diphospho-N-acetyl-alpha-D-muramoyl-L-alanyl-D-glutamyl-meso-2,6-diaminopimeloyl-D-alanyl-D-alanine + UMP. It participates in cell wall biogenesis; peptidoglycan biosynthesis. Functionally, catalyzes the initial step of the lipid cycle reactions in the biosynthesis of the cell wall peptidoglycan: transfers peptidoglycan precursor phospho-MurNAc-pentapeptide from UDP-MurNAc-pentapeptide onto the lipid carrier undecaprenyl phosphate, yielding undecaprenyl-pyrophosphoryl-MurNAc-pentapeptide, known as lipid I. The sequence is that of Phospho-N-acetylmuramoyl-pentapeptide-transferase from Kocuria rhizophila (strain ATCC 9341 / DSM 348 / NBRC 103217 / DC2201).